Consider the following 353-residue polypeptide: G-protein complex alpha subunit gpaA (353 aa).

The interval 1–25 is disordered; that stretch reads MGCGMSTEDKEGKARNEEIENQLKR. The span at 7–25 shows a compositional bias: basic and acidic residues; that stretch reads TEDKEGKARNEEIENQLKR. In terms of domain architecture, G-alpha spans 32-353; the sequence is NEIKMLLLGA…QENLRLCGLI (322 aa). Residues 35–48 are G1 motif; sequence KMLLLGAGESGKST. Residues S47 and T181 each coordinate a divalent metal cation. Positions 173–181 are G2 motif; that stretch reads DVLRSRVKT. Residues 196–205 form a G3 motif region; that stretch reads YRMFDVGGQR. The G4 motif stretch occupies residues 265–272; that stretch reads ILFLNKID. Residues 323 to 328 are G5 motif; the sequence is TCATDT.

Belongs to the G-alpha family. G(q) subfamily. As to quaternary structure, g proteins are composed of 3 units; alpha, beta and gamma. The alpha chain contains the guanine nucleotide binding site. Interacts with gprM.

Its function is as follows. G-protein complex alpha subunit that plays a role in conidiation and regulation of the biosynthesis of secondary metabolites such as dihydroxynaphthalene (DHN)-melanin, via interaction with the G protein-coupled receptor gprM. In Aspergillus fumigatus (strain CBS 144.89 / FGSC A1163 / CEA10) (Neosartorya fumigata), this protein is G-protein complex alpha subunit gpaA.